Consider the following 394-residue polypeptide: Probable purine permease 8 (394 aa).

The next 10 helical transmembrane spans lie at 45–65 (WLRI…STIL), 77–97 (TWMG…FRFF), 113–133 (FSSF…VSAN), 139–159 (VGLL…QLAF), 172–192 (FTPF…LLVV), 208–228 (VIGI…LSLV), 247–267 (LVAY…FASG), 289–309 (TLAS…GLIF), 315–335 (FSNS…VIVF), and 344–364 (IFSI…HYLD). Residues 373–394 (TSPVGDPHLLPAEEGHTNIHSV) form a disordered region. A compositionally biased stretch (basic and acidic residues) spans 383–394 (PAEEGHTNIHSV).

Belongs to the purine permeases (TC 2.A.7.14) family.

It localises to the membrane. The chain is Probable purine permease 8 (PUP8) from Arabidopsis thaliana (Mouse-ear cress).